A 332-amino-acid chain; its full sequence is Adenosine receptor A2b (332 aa).

Residues 1–8 (MPLEAQDA) are Extracellular-facing. Residues 9–33 (VYVALELALAALSVTGNVLVCAAVG) traverse the membrane as a helical segment. The Cytoplasmic segment spans residues 34–43 (TSSALQTPTN). The helical transmembrane segment at 44–67 (YFLVSLAAADVAVGLFAIPFAVTI) threads the bilayer. Topologically, residues 68–78 (SLGFCTDFHSC) are extracellular. Residues Cys78 and Cys170 are joined by a disulfide bond. A helical membrane pass occupies residues 79–101 (LFLACFVLVLTQSSIFSLLAVAV). The Cytoplasmic portion of the chain corresponds to 102–121 (DRYLAVRVPLRYKSLVTGAR). A helical membrane pass occupies residues 122–144 (ARGVIAALWVLAFGIGLTPFLGW). The Extracellular segment spans residues 145-177 (NDRKIATNCTEPGDAATNVSCCLIRCLFENVVP). N-linked (GlcNAc...) asparagine glycosylation is found at Asn152 and Asn162. Glu173 is an adenosine binding site. Residues 178 to 202 (MSYMVYFNFFGCVLPPLLIMLVIYV) form a helical membrane-spanning segment. Residues 203–234 (KIFLVACRQLQRTELMDHSRTVLQREIHAAKS) are Cytoplasmic-facing. The helical transmembrane segment at 235-258 (LALIVGIFALCWLPVHTINCASLF) threads the bilayer. Residue Asn253 participates in adenosine binding. The Extracellular segment spans residues 259-266 (QPTWAKVK). A helical membrane pass occupies residues 267-290 (PKWAINTAILLSHANSAVNPIVYA). Adenosine is bound by residues Ser278 and His279. Residues 291–332 (YRNRDFRYTFHKIISRYILCRTHILKSGEGQVGSQPTLQLGL) are Cytoplasmic-facing. A lipid anchor (S-palmitoyl cysteine) is attached at Cys310.

This sequence belongs to the G-protein coupled receptor 1 family.

The protein resides in the cell membrane. Receptor for adenosine. The activity of this receptor is mediated by G proteins which activate adenylyl cyclase. The sequence is that of Adenosine receptor A2b (ADORA2B) from Bos taurus (Bovine).